Here is a 211-residue protein sequence, read N- to C-terminus: UPF0637 protein BLi01683/BL05149 (211 aa).

Belongs to the UPF0637 family.

The protein is UPF0637 protein BLi01683/BL05149 of Bacillus licheniformis (strain ATCC 14580 / DSM 13 / JCM 2505 / CCUG 7422 / NBRC 12200 / NCIMB 9375 / NCTC 10341 / NRRL NRS-1264 / Gibson 46).